Reading from the N-terminus, the 394-residue chain is Phosphoglycerate kinase (394 aa).

Residues 21–23 (DFN), R37, 60–63 (HLGR), R119, and R152 contribute to the substrate site. ATP-binding positions include K202, G293, E324, and 350-353 (GGDS).

The protein belongs to the phosphoglycerate kinase family. As to quaternary structure, monomer.

It is found in the cytoplasm. The enzyme catalyses (2R)-3-phosphoglycerate + ATP = (2R)-3-phospho-glyceroyl phosphate + ADP. It functions in the pathway carbohydrate degradation; glycolysis; pyruvate from D-glyceraldehyde 3-phosphate: step 2/5. The polypeptide is Phosphoglycerate kinase (Caldanaerobacter subterraneus subsp. tengcongensis (strain DSM 15242 / JCM 11007 / NBRC 100824 / MB4) (Thermoanaerobacter tengcongensis)).